Consider the following 340-residue polypeptide: Organic solute transporter subunit alpha (340 aa).

Over 1–52 (MEPDRTQIRLDPRYTADLLEILKTNYSVPSACFSYPPTAAQLLRALGPVDIS) the chain is Extracellular. Asparagine 25 carries an N-linked (GlcNAc...) asparagine glycan. A helical membrane pass occupies residues 53–73 (LMVIMTLFVLGSIAIFLEAAV). Residues 74–87 (YLHKNTRCPIKRKT) are Cytoplasmic-facing. Residues 88–108 (LIWCSSSPTIVSAFSCFGLWI) traverse the membrane as a helical segment. Over 109 to 110 (PR) the chain is Extracellular. A helical membrane pass occupies residues 111–131 (ALTLVEMAITTFYSMCFYLLM). Residues 132-186 (QAMVEGFGGKEAVLRTLKDTPVMIHTGPCCCCCPCCPRIKITRKRLQLLLLGPIQ) lie on the Cytoplasmic side of the membrane. A helical transmembrane segment spans residues 187–207 (YAFFKISLTLVGLFLIPDGIF). Residues 208 to 219 (DPSDISEGSTAL) are Extracellular-facing. The helical transmembrane segment at 220 to 240 (WINTFLGVSTLSALWTIGIIF) threads the bilayer. The Cytoplasmic portion of the chain corresponds to 241–255 (RQARLHLGEQNIGAK). Residues 256–276 (FVLFQALLILSALQPSIFSVL) form a helical membrane-spanning segment. The Extracellular segment spans residues 277 to 295 (ASGGQIACSPPFSSKIRSQ). The chain crosses the membrane as a helical span at residues 296-316 (VMNCHLLILESFLITVLTRIY). The Cytoplasmic portion of the chain corresponds to 317–340 (YRRKDDKLGYEPFSSPDQDLNLKA). Serine 330 bears the Phosphoserine mark.

The protein belongs to the OST-alpha family. Interacts with SLC51B. The Ost-alpha/Ost-beta complex is a heterodimer composed of alpha (SLC51A) and beta (SLC51B) subunit.

Its subcellular location is the cell membrane. The protein resides in the endoplasmic reticulum membrane. The catalysed reaction is taurocholate(out) = taurocholate(in). It catalyses the reaction estrone 3-sulfate(out) = estrone 3-sulfate(in). The enzyme catalyses dehydroepiandrosterone 3-sulfate(out) = dehydroepiandrosterone 3-sulfate(in). It carries out the reaction tauroursodeoxycholate(out) = tauroursodeoxycholate(in). The catalysed reaction is glycoursodeoxycholate(out) = glycoursodeoxycholate(in). It catalyses the reaction glycocholate(out) = glycocholate(in). The enzyme catalyses taurochenodeoxycholate(out) = taurochenodeoxycholate(in). It carries out the reaction glycochenodeoxycholate(out) = glycochenodeoxycholate(in). The catalysed reaction is taurodeoxycholate(out) = taurodeoxycholate(in). It catalyses the reaction glycodeoxycholate(out) = glycodeoxycholate(in). The enzyme catalyses prostaglandin E2(out) = prostaglandin E2(in). Essential component of the Ost-alpha/Ost-beta complex, a heterodimer that acts as the intestinal basolateral transporter responsible for bile acid export from enterocytes into portal blood. Efficiently transports the major species of bile acids (taurocholate). Taurine conjugates are transported more efficiently across the basolateral membrane than glycine-conjugated bile acids. Can also transport steroids such as estrone 3-sulfate and dehydroepiandrosterone 3-sulfate, therefore playing a role in the enterohepatic circulation of sterols. Able to transport eicosanoids such as prostaglandin E2. This is Organic solute transporter subunit alpha (SLC51A) from Bos taurus (Bovine).